A 219-amino-acid chain; its full sequence is Probable glucosamine 6-phosphate N-acetyltransferase (219 aa).

The region spanning 42–198 is the N-acetyltransferase domain; the sequence is MKVRPLKDTD…EGPTLKRNAT (157 aa). Substrate is bound by residues Thr-64, 111–114, and 123–125; these read KFIH and EDV. Acetyl-CoA is bound at residue 133 to 138; sequence GKQLGK. Residues 154 to 155 and Arg-186 contribute to the substrate site; that span reads YK.

Belongs to the acetyltransferase family. GNA1 subfamily.

The catalysed reaction is D-glucosamine 6-phosphate + acetyl-CoA = N-acetyl-D-glucosamine 6-phosphate + CoA + H(+). It participates in nucleotide-sugar biosynthesis; UDP-N-acetyl-alpha-D-glucosamine biosynthesis; N-acetyl-alpha-D-glucosamine 1-phosphate from alpha-D-glucosamine 6-phosphate (route I): step 1/2. The chain is Probable glucosamine 6-phosphate N-acetyltransferase from Drosophila melanogaster (Fruit fly).